A 287-amino-acid polypeptide reads, in one-letter code: ATP synthase gamma chain (287 aa).

This sequence belongs to the ATPase gamma chain family. In terms of assembly, F-type ATPases have 2 components, CF(1) - the catalytic core - and CF(0) - the membrane proton channel. CF(1) has five subunits: alpha(3), beta(3), gamma(1), delta(1), epsilon(1). CF(0) has three main subunits: a, b and c.

The protein resides in the cell membrane. Produces ATP from ADP in the presence of a proton gradient across the membrane. The gamma chain is believed to be important in regulating ATPase activity and the flow of protons through the CF(0) complex. The protein is ATP synthase gamma chain of Staphylococcus carnosus (strain TM300).